A 491-amino-acid polypeptide reads, in one-letter code: Protein SET DOMAIN GROUP 40 (491 aa).

Residues 36 to 278 enclose the SET domain; that stretch reads HSLSVSDFPD…LGEQVLLCYG (243 aa).

It belongs to the class V-like SAM-binding methyltransferase superfamily.

The sequence is that of Protein SET DOMAIN GROUP 40 (SDG40) from Arabidopsis thaliana (Mouse-ear cress).